We begin with the raw amino-acid sequence, 221 residues long: Transcription antitermination protein NusB (221 aa).

The protein belongs to the NusB family.

In terms of biological role, involved in transcription antitermination. Required for transcription of ribosomal RNA (rRNA) genes. Binds specifically to the boxA antiterminator sequence of the ribosomal RNA (rrn) operons. In Synechocystis sp. (strain ATCC 27184 / PCC 6803 / Kazusa), this protein is Transcription antitermination protein NusB.